Consider the following 662-residue polypeptide: MTTLTSGSPTPMGAHFDGVGINFTLFSAHAEQVELCLFDDNNQELRIPLPARSGDIWHGYLPGGKPGQRYGYRVSGPFNPQQGHRFNPHKLLIDPYARALDRKVGDDPSLQGGVSQPDYRDSAAVAPKCIVVHEEYDWQGDRRPTIPWGNTVIYEAHVRGLTQLHPDIPADLRGTYAGLAHPAMIQYLQKLGITTLELLPVQFHIDEPRLQKMGLSNYWGYNVLAPYAVDPDYASGREGISPLRELRDAVKALHQAGIEVILDVVFNHSAELDVFGPTLCQRGIDNASYYWLTSEGEYDNMTGCGNTLRLSQPYVMQWVLDCLRYWVDSCHIDGFRFDLGTVLGRSPAFDQHAPLFAALAADKQLCNCKMIAEPWDIGLGGYQLGNFPTGFSEWNDQYRDAMRRFWLRGDLPLGQFAQHFAASSNLFKHRERLPSASINQITAHDGFTLQDLLCFNQKHNQINGEENRDGSDNNLSNNFGSEGLVADDAIWQRRKACQRALLTTLLLSQGTPMLLAGDEHGHSQQGNNNAYCQNNILTWLDWGSADRELTAFTAELIRLRQQIPALIQDSWWEDGDGNVQWLDSQGEALSDGAWEQGCQKQLQIRLSQRWLVVINATDQACEMHLPVGEWVVIPPFEPSEHTEPLTVWNGSAHTVCVLTQKF.

The active-site Nucleophile is the aspartate 338. Glutamate 373 functions as the Proton donor in the catalytic mechanism.

Belongs to the glycosyl hydrolase 13 family.

It catalyses the reaction Hydrolysis of (1-&gt;6)-alpha-D-glucosidic linkages to branches with degrees of polymerization of three or four glucose residues in limit dextrin.. The protein operates within glycan degradation; glycogen degradation. Its function is as follows. Removes maltotriose and maltotetraose chains that are attached by 1,6-alpha-linkage to the limit dextrin main chain, generating a debranched limit dextrin. This is Glycogen debranching enzyme from Yersinia enterocolitica serotype O:8 / biotype 1B (strain NCTC 13174 / 8081).